A 295-amino-acid chain; its full sequence is Acetylglutamate kinase (295 aa).

Substrate-binding positions include 64 to 65, Arg86, and Asn190; that span reads GG.

The protein belongs to the acetylglutamate kinase family. ArgB subfamily.

Its subcellular location is the cytoplasm. It carries out the reaction N-acetyl-L-glutamate + ATP = N-acetyl-L-glutamyl 5-phosphate + ADP. It functions in the pathway amino-acid biosynthesis; L-arginine biosynthesis; N(2)-acetyl-L-ornithine from L-glutamate: step 2/4. Functionally, catalyzes the ATP-dependent phosphorylation of N-acetyl-L-glutamate. The sequence is that of Acetylglutamate kinase from Pelotomaculum thermopropionicum (strain DSM 13744 / JCM 10971 / SI).